A 706-amino-acid polypeptide reads, in one-letter code: Kinesin-like protein KIF2A (706 aa).

The tract at residues 1–217 (MATANFGKIQ…LDYRPLTTAD (217 aa)) is globular. Residues 66–139 (LVPDEEIEPS…AQQNGSVSDI (74 aa)) are disordered. Ser75 bears the Phosphoserine mark. Phosphothreonine occurs at positions 78 and 97. Phosphoserine is present on Ser100. Lys102 carries the N6-acetyllysine modification. The segment covering 123 to 139 (FPEQSSSAQQNGSVSDI) has biased composition (polar residues). Phosphoserine occurs at positions 135 and 140. The disordered stretch occupies residues 165–186 (KLQEKREKRRLQQQELREKRAQ). Residues 223 to 553 (RICVCVRKRP…LRYANRVKEL (331 aa)) form the Kinesin motor domain. 313 to 320 (GQTGSGKT) provides a ligand contact to ATP. Asp556 and Gln573 each carry phosphoserine. The stretch at 660–699 (ATQLEAILEQKIDILTELRDKVKSFRAALQEEEQASKQIN) forms a coiled coil.

Belongs to the TRAFAC class myosin-kinesin ATPase superfamily. Kinesin family. MCAK/KIF2 subfamily. Interacts with AURKA and PLK1. Interacts with PSRC1. Interacts with MCRS1; the interaction enhances recruitment of KIF2A to the minus ends of spindle microtubules which promotes chromosome alignment.

It localises to the cytoplasm. It is found in the cytoskeleton. The protein localises to the microtubule organizing center. Its subcellular location is the centrosome. The protein resides in the spindle pole. It localises to the spindle. Functionally, plus end-directed microtubule-dependent motor required for normal brain development. May regulate microtubule dynamics during axonal growth. Required for normal progression through mitosis. Required for normal congress of chromosomes at the metaphase plate. Required for normal spindle dynamics during mitosis. Promotes spindle turnover. Implicated in formation of bipolar mitotic spindles. Has microtubule depolymerization activity. This chain is Kinesin-like protein KIF2A (KIF2A), found in Homo sapiens (Human).